A 113-amino-acid chain; its full sequence is Teretoxin Tan14.1 (113 aa).

Positions 1-21 are cleaved as a signal peptide; that stretch reads MALEAQMTLRMFVLVAMASTV. Residues 22 to 86 constitute a propeptide that is removed on maturation; sequence HVLSSSFSED…DETSSRTGKR (65 aa).

The protein belongs to the teretoxin N (TN) superfamily. Post-translationally, contains 2 disulfide bonds. In terms of tissue distribution, expressed by the venom duct.

The protein resides in the secreted. In Terebra anilis (Auger snail), this protein is Teretoxin Tan14.1.